Reading from the N-terminus, the 239-residue chain is tRNA (guanine-N(1)-)-methyltransferase (239 aa).

S-adenosyl-L-methionine-binding positions include G110 and 130–135 (VGDYVL).

The protein belongs to the RNA methyltransferase TrmD family. As to quaternary structure, homodimer.

It is found in the cytoplasm. It carries out the reaction guanosine(37) in tRNA + S-adenosyl-L-methionine = N(1)-methylguanosine(37) in tRNA + S-adenosyl-L-homocysteine + H(+). In terms of biological role, specifically methylates guanosine-37 in various tRNAs. This is tRNA (guanine-N(1)-)-methyltransferase from Borrelia hermsii (strain HS1 / DAH).